Reading from the N-terminus, the 294-residue chain is Foldase protein PrsA 1 (294 aa).

Residues 1–21 (MTKLKKVMISVIAATLLLLAG) form the signal peptide. Residue Cys22 is the site of N-palmitoyl cysteine attachment. Cys22 carries the S-diacylglycerol cysteine lipid modification. The PpiC domain occupies 135–226 (EPDITVRHIL…YGYHLIQLVK (92 aa)).

This sequence belongs to the PrsA family.

It is found in the cell membrane. It carries out the reaction [protein]-peptidylproline (omega=180) = [protein]-peptidylproline (omega=0). Its function is as follows. Plays a major role in protein secretion by helping the post-translocational extracellular folding of several secreted proteins. This is Foldase protein PrsA 1 from Listeria monocytogenes serotype 4b (strain F2365).